The following is a 125-amino-acid chain: Small ribosomal subunit protein uS13 (125 aa).

The segment at 90–125 (QRHRKGLPVRGQRTKTNARTRKGPKRTVAGKKKATK) is disordered.

The protein belongs to the universal ribosomal protein uS13 family. As to quaternary structure, part of the 30S ribosomal subunit. Forms a loose heterodimer with protein S19. Forms two bridges to the 50S subunit in the 70S ribosome.

Located at the top of the head of the 30S subunit, it contacts several helices of the 16S rRNA. In the 70S ribosome it contacts the 23S rRNA (bridge B1a) and protein L5 of the 50S subunit (bridge B1b), connecting the 2 subunits; these bridges are implicated in subunit movement. Contacts the tRNAs in the A and P-sites. The sequence is that of Small ribosomal subunit protein uS13 from Bifidobacterium longum (strain DJO10A).